A 205-amino-acid polypeptide reads, in one-letter code: Ribosomal RNA small subunit methyltransferase G (205 aa).

S-adenosyl-L-methionine contacts are provided by residues Gly-66, Phe-71, 119–120 (IE), and Arg-135.

Belongs to the methyltransferase superfamily. RNA methyltransferase RsmG family.

It localises to the cytoplasm. It catalyses the reaction guanosine(527) in 16S rRNA + S-adenosyl-L-methionine = N(7)-methylguanosine(527) in 16S rRNA + S-adenosyl-L-homocysteine. Its function is as follows. Specifically methylates the N7 position of guanine in position 527 of 16S rRNA. The polypeptide is Ribosomal RNA small subunit methyltransferase G (Rhizobium etli (strain ATCC 51251 / DSM 11541 / JCM 21823 / NBRC 15573 / CFN 42)).